Reading from the N-terminus, the 469-residue chain is Glutamate--tRNA ligase 2 (469 aa).

A 'HIGH' region motif is present at residues 10–20 (PSPTGYLHIGG). Zn(2+) is bound by residues C99, C101, C126, and D128. Positions 237-241 (RLSKR) match the 'KMSKS' region motif. Residue K240 participates in ATP binding.

The protein belongs to the class-I aminoacyl-tRNA synthetase family. Glutamate--tRNA ligase type 1 subfamily. In terms of assembly, monomer. Zn(2+) serves as cofactor.

The protein localises to the cytoplasm. It carries out the reaction tRNA(Glu) + L-glutamate + ATP = L-glutamyl-tRNA(Glu) + AMP + diphosphate. Functionally, catalyzes the attachment of glutamate to tRNA(Glu) in a two-step reaction: glutamate is first activated by ATP to form Glu-AMP and then transferred to the acceptor end of tRNA(Glu). The sequence is that of Glutamate--tRNA ligase 2 from Coxiella burnetii (strain CbuG_Q212) (Coxiella burnetii (strain Q212)).